A 268-amino-acid chain; its full sequence is Glutamate racemase (268 aa).

Residues 13–14 and 45–46 contribute to the substrate site; these read DS and YG. The Proton donor/acceptor role is filled by cysteine 77. Residue 78–79 coordinates substrate; it reads NT. Residue cysteine 185 is the Proton donor/acceptor of the active site. A substrate-binding site is contributed by 186–187; sequence TH.

Belongs to the aspartate/glutamate racemases family.

It catalyses the reaction L-glutamate = D-glutamate. It functions in the pathway cell wall biogenesis; peptidoglycan biosynthesis. In terms of biological role, provides the (R)-glutamate required for cell wall biosynthesis. This chain is Glutamate racemase, found in Vibrio campbellii (strain ATCC BAA-1116).